The sequence spans 62 residues: Large ribosomal subunit protein uL30 (62 aa).

The protein belongs to the universal ribosomal protein uL30 family. In terms of assembly, part of the 50S ribosomal subunit.

In Herpetosiphon aurantiacus (strain ATCC 23779 / DSM 785 / 114-95), this protein is Large ribosomal subunit protein uL30.